A 245-amino-acid polypeptide reads, in one-letter code: tRNA pseudouridine synthase A (245 aa).

D52 functions as the Nucleophile in the catalytic mechanism. Substrate is bound at residue Y111.

This sequence belongs to the tRNA pseudouridine synthase TruA family. Homodimer.

It carries out the reaction uridine(38/39/40) in tRNA = pseudouridine(38/39/40) in tRNA. In terms of biological role, formation of pseudouridine at positions 38, 39 and 40 in the anticodon stem and loop of transfer RNAs. The chain is tRNA pseudouridine synthase A from Rickettsia africae (strain ESF-5).